A 188-amino-acid polypeptide reads, in one-letter code: UPF0301 protein XF_2228 (188 aa).

The protein belongs to the UPF0301 (AlgH) family.

This chain is UPF0301 protein XF_2228, found in Xylella fastidiosa (strain 9a5c).